A 515-amino-acid chain; its full sequence is 1-pyrroline-5-carboxylate dehydrogenase (515 aa).

Residues Glu-286 and Cys-320 contribute to the active site.

This sequence belongs to the aldehyde dehydrogenase family. RocA subfamily.

It carries out the reaction L-glutamate 5-semialdehyde + NAD(+) + H2O = L-glutamate + NADH + 2 H(+). Its pathway is amino-acid degradation; L-proline degradation into L-glutamate; L-glutamate from L-proline: step 2/2. This Bacillus pumilus (strain SAFR-032) protein is 1-pyrroline-5-carboxylate dehydrogenase.